Here is an 84-residue protein sequence, read N- to C-terminus: Perlustrin (84 aa).

Residues 1–82 enclose the IGFBP N-terminal domain; that stretch reads LSCASCENAA…LDFKGVCARV (82 aa). Cystine bridges form between C3–C28, C6–C30, C11–C31, C18–C34, C42–C55, and C49–C79.

Shell.

Functionally, binds human IGF1 and IGF2 and bovine insulin. The protein is Perlustrin of Haliotis laevigata (Smooth Australian abalone).